The chain runs to 546 residues: MTTRYIFVTGGVVSSLGKGIAAASLAAILEARGLNVTIMKLDPYINVDPGTMSPTQHGEVFVTEDGAETDLDLGHYERFIRTKMNRRNNFTTGRIYEEVLRKERRGDYLGATIQVIPHITNAIKEKVLAGGEGHDVAIVEIGGTVGDIESLPFLESIRQLGVELGRDRTLFMHLTLVPFLGAAGEVKTKPTQHSVKELRSIGIAPDVLICRGDRAIPANERAKISLFCNVEERAVISLKDVDSIYKIPALLRSQGLDELVVKRFSLTCREADLSEWENVIYQEANPNGEVVIGMVGKYIELPDAYKSVNEALKHAGLKNRVSVTIKYIDSQTVEAKGDEVLQGLDGILVPGGFGERGVEGKILAAKFARENNLPYFGICLGMQVALIEFARNVAGMADAHSTEFNKATPFPVVGLITEWVDEEGNVEQRHEASDLGGTMRLGAQLCHLLEGSKAAQAYKGNSCVERHRHRYEVNNKYKERLEQAGLVFSGLSSDRKLVEMIELKDHPWFVAGQFHPEFTSTPRDGHPLFEGFVAAASAHQKRDLKK.

An amidoligase domain region spans residues 1 to 266; the sequence is MTTRYIFVTG…DELVVKRFSL (266 aa). A CTP-binding site is contributed by Ser14. Ser14 is a UTP binding site. ATP is bound by residues 15-20 and Asp72; that span reads SLGKGI. Mg(2+)-binding residues include Asp72 and Glu140. Residues 147 to 149, 187 to 192, and Lys223 each bind CTP; these read DIE and KTKPTQ. Residues 187–192 and Lys223 each bind UTP; that span reads KTKPTQ. Position 239–241 (239–241) interacts with ATP; it reads KDV. The region spanning 291–542 is the Glutamine amidotransferase type-1 domain; it reads VIGMVGKYIE…VAAASAHQKR (252 aa). An L-glutamine-binding site is contributed by Gly352. Cys379 acts as the Nucleophile; for glutamine hydrolysis in catalysis. L-glutamine-binding positions include 380–383, Glu403, and Arg470; that span reads LGMQ. Residues His515 and Glu517 contribute to the active site.

The protein belongs to the CTP synthase family. Homotetramer.

The catalysed reaction is UTP + L-glutamine + ATP + H2O = CTP + L-glutamate + ADP + phosphate + 2 H(+). It carries out the reaction L-glutamine + H2O = L-glutamate + NH4(+). It catalyses the reaction UTP + NH4(+) + ATP = CTP + ADP + phosphate + 2 H(+). Its pathway is pyrimidine metabolism; CTP biosynthesis via de novo pathway; CTP from UDP: step 2/2. Its activity is regulated as follows. Allosterically activated by GTP, when glutamine is the substrate; GTP has no effect on the reaction when ammonia is the substrate. The allosteric effector GTP functions by stabilizing the protein conformation that binds the tetrahedral intermediate(s) formed during glutamine hydrolysis. Inhibited by the product CTP, via allosteric rather than competitive inhibition. Its function is as follows. Catalyzes the ATP-dependent amination of UTP to CTP with either L-glutamine or ammonia as the source of nitrogen. Regulates intracellular CTP levels through interactions with the four ribonucleotide triphosphates. The protein is CTP synthase of Shewanella oneidensis (strain ATCC 700550 / JCM 31522 / CIP 106686 / LMG 19005 / NCIMB 14063 / MR-1).